A 395-amino-acid chain; its full sequence is 1-deoxy-D-xylulose 5-phosphate reductoisomerase (395 aa).

6 residues coordinate NADPH: Thr-10, Gly-11, Ser-12, Ile-13, Ala-36, and Asn-123. Lys-124 is a binding site for 1-deoxy-D-xylulose 5-phosphate. Glu-125 contacts NADPH. Position 149 (Asp-149) interacts with Mn(2+). 1-deoxy-D-xylulose 5-phosphate contacts are provided by Ser-150, Glu-151, Ser-185, and His-208. Glu-151 provides a ligand contact to Mn(2+). Gly-214 provides a ligand contact to NADPH. Residues Ser-221, Asn-226, Lys-227, and Glu-230 each contribute to the 1-deoxy-D-xylulose 5-phosphate site. Glu-230 is a binding site for Mn(2+).

Belongs to the DXR family. Mg(2+) serves as cofactor. Mn(2+) is required as a cofactor.

The enzyme catalyses 2-C-methyl-D-erythritol 4-phosphate + NADP(+) = 1-deoxy-D-xylulose 5-phosphate + NADPH + H(+). The protein operates within isoprenoid biosynthesis; isopentenyl diphosphate biosynthesis via DXP pathway; isopentenyl diphosphate from 1-deoxy-D-xylulose 5-phosphate: step 1/6. In terms of biological role, catalyzes the NADPH-dependent rearrangement and reduction of 1-deoxy-D-xylulose-5-phosphate (DXP) to 2-C-methyl-D-erythritol 4-phosphate (MEP). The sequence is that of 1-deoxy-D-xylulose 5-phosphate reductoisomerase from Shewanella amazonensis (strain ATCC BAA-1098 / SB2B).